Here is a 407-residue protein sequence, read N- to C-terminus: MGQKERSTADTLPDLEEWKSAAGLRWWQTAVVDGSGSGNEVIEGPQNARVLKGSQARFNCTVSQGWKLIMWALSDMVVLSVRPMEPIITNDRFTSQRYDQGGNFTSEMIIHNVEPSDSGNIRCSLQNSRLHGSAYLTVQVMGELFIPSVNLVVAENEPCEVTCLPSHWTRLPDISWELGLLVSHSSYYFVPEPSDLQSAVSILALTPQSNGTLTCVATWKSLKARKSATVNLTVIRCPQDTGGGINIPGVLSSLPSLGFSLPTWGKVGLGLAGTMLLTPTCTLTIRCCCCRRRCCGCNCCCRCCFCCRRKRGFRIQFQKKSEKEKTNKETETESGNENSGYNSDEQKTTDTASLPPKSCESSDPEQRNSSCGPPHQRADQRPPRPASHPQASFNLASPEKVSNTTVV.

Residues Met-1–Lys-266 lie on the Extracellular side of the membrane. 2 consecutive Ig-like V-type domains span residues Asn-39 to Gln-139 and Gly-142 to Asn-231. Residues Asn-59, Asn-103, Asn-210, and Asn-231 are each glycosylated (N-linked (GlcNAc...) asparagine). 2 cysteine pairs are disulfide-bonded: Cys-60/Cys-123 and Cys-163/Cys-215. Residues Val-267–Ile-285 form a helical membrane-spanning segment. Residues Arg-286–Val-407 lie on the Cytoplasmic side of the membrane. Basic and acidic residues predominate over residues Lys-320 to Glu-331. The disordered stretch occupies residues Lys-320–Val-407. Over residues Pro-389–Val-407 the composition is skewed to polar residues.

It belongs to the immunoglobulin superfamily. Interacts with MAGI1 at tight junctions, forms a tripartite complex with NPHS1. Interacts with LNX1 isoform 2 via its PDZ 2 domain, it may also interact with other isoforms containing this domain.

The protein resides in the apical cell membrane. It is found in the cell junction. The protein localises to the tight junction. Its function is as follows. Provides, together with MAGI1, an adhesion machinery at tight junctions, which may regulate the permeability of kidney glomerulus and small intestinal epithelial cells. Mediates calcium-independent homophilic cell adhesion. In testis, it may function as a cell adhesion molecule rather than a tight-junction protein. It may participate in the adhesion between spermatogonia-spermatogonia, spermatogonia-Sertoli cells, and Sertoli cells-Sertoli cells. The chain is Immunoglobulin superfamily member 5 (IGSF5) from Homo sapiens (Human).